The following is a 336-amino-acid chain: Holliday junction branch migration complex subunit RuvB (336 aa).

A large ATPase domain (RuvB-L) region spans residues 4–184 (ADRLISAGTT…FGIVQRLEFY (181 aa)). Residues Ile-23, Arg-24, Gly-65, Lys-68, Thr-69, Thr-70, 131–133 (EDY), Arg-174, Tyr-184, and Arg-221 contribute to the ATP site. Thr-69 contributes to the Mg(2+) binding site. A small ATPAse domain (RuvB-S) region spans residues 185–255 (QVPDLQYIVS…IAAQALDMLN (71 aa)). The interval 258-336 (AEGFDYMDRK…HFGITPPEMP (79 aa)) is head domain (RuvB-H). The DNA site is built by Arg-294, Arg-313, and Arg-318.

The protein belongs to the RuvB family. As to quaternary structure, homohexamer. Forms an RuvA(8)-RuvB(12)-Holliday junction (HJ) complex. HJ DNA is sandwiched between 2 RuvA tetramers; dsDNA enters through RuvA and exits via RuvB. An RuvB hexamer assembles on each DNA strand where it exits the tetramer. Each RuvB hexamer is contacted by two RuvA subunits (via domain III) on 2 adjacent RuvB subunits; this complex drives branch migration. In the full resolvosome a probable DNA-RuvA(4)-RuvB(12)-RuvC(2) complex forms which resolves the HJ.

Its subcellular location is the cytoplasm. The enzyme catalyses ATP + H2O = ADP + phosphate + H(+). In terms of biological role, the RuvA-RuvB-RuvC complex processes Holliday junction (HJ) DNA during genetic recombination and DNA repair, while the RuvA-RuvB complex plays an important role in the rescue of blocked DNA replication forks via replication fork reversal (RFR). RuvA specifically binds to HJ cruciform DNA, conferring on it an open structure. The RuvB hexamer acts as an ATP-dependent pump, pulling dsDNA into and through the RuvAB complex. RuvB forms 2 homohexamers on either side of HJ DNA bound by 1 or 2 RuvA tetramers; 4 subunits per hexamer contact DNA at a time. Coordinated motions by a converter formed by DNA-disengaged RuvB subunits stimulates ATP hydrolysis and nucleotide exchange. Immobilization of the converter enables RuvB to convert the ATP-contained energy into a lever motion, pulling 2 nucleotides of DNA out of the RuvA tetramer per ATP hydrolyzed, thus driving DNA branch migration. The RuvB motors rotate together with the DNA substrate, which together with the progressing nucleotide cycle form the mechanistic basis for DNA recombination by continuous HJ branch migration. Branch migration allows RuvC to scan DNA until it finds its consensus sequence, where it cleaves and resolves cruciform DNA. In Escherichia coli (strain ATCC 8739 / DSM 1576 / NBRC 3972 / NCIMB 8545 / WDCM 00012 / Crooks), this protein is Holliday junction branch migration complex subunit RuvB.